The sequence spans 557 residues: Putative UDP-glucuronate:xylan alpha-glucuronosyltransferase 4 (557 aa).

Residues 11–31 form a helical; Signal-anchor for type II membrane protein membrane-spanning segment; the sequence is KIFMIYLILVSLSLLGLILPF. Mn(2+) is bound by residues aspartate 365 and aspartate 367. Residues 365–367, 394–396, 421–425, and 466–471 contribute to the substrate site; these read DAD, NSG, NGGDQ, and HYLGLK. Position 466 (histidine 466) interacts with Mn(2+).

The protein belongs to the glycosyltransferase 8 family. Glycogenin subfamily. Mn(2+) is required as a cofactor.

It localises to the golgi apparatus membrane. In terms of biological role, may be involved in the substitutions of the xylan backbone in stem glucuronoxylan. The polypeptide is Putative UDP-glucuronate:xylan alpha-glucuronosyltransferase 4 (GUX4) (Arabidopsis thaliana (Mouse-ear cress)).